The primary structure comprises 306 residues: Acetaldehyde dehydrogenase (306 aa).

12–15 (SGNI) lines the NAD(+) pocket. The Acyl-thioester intermediate role is filled by cysteine 127. Residues 158–166 (SAGPGTRAN) and asparagine 277 each bind NAD(+).

It belongs to the acetaldehyde dehydrogenase family.

The catalysed reaction is acetaldehyde + NAD(+) + CoA = acetyl-CoA + NADH + H(+). This chain is Acetaldehyde dehydrogenase, found in Mycolicibacterium gilvum (strain PYR-GCK) (Mycobacterium gilvum (strain PYR-GCK)).